The chain runs to 212 residues: Thymidylate kinase (212 aa).

10–17 (GGEGSGKT) is an ATP binding site.

This sequence belongs to the thymidylate kinase family.

It catalyses the reaction dTMP + ATP = dTDP + ADP. Its function is as follows. Phosphorylation of dTMP to form dTDP in both de novo and salvage pathways of dTTP synthesis. This chain is Thymidylate kinase, found in Marinomonas sp. (strain MWYL1).